The sequence spans 355 residues: Capsular polysaccharide biosynthesis glycosyltransferase CapH (355 aa).

It belongs to the glycosyltransferase group 1 family. Glycosyltransferase 4 subfamily.

It functions in the pathway capsule biogenesis; capsule polysaccharide biosynthesis. Functionally, required for the biosynthesis of type 1 capsular polysaccharide. The sequence is that of Capsular polysaccharide biosynthesis glycosyltransferase CapH (capH) from Staphylococcus aureus.